The primary structure comprises 196 residues: HTH-type transcriptional regulator BetI (196 aa).

The region spanning 8 to 68 (PIRRSQLIAA…ATMRHLMQAL (61 aa)) is the HTH tetR-type domain. The H-T-H motif DNA-binding region spans 31 to 50 (SIAYIARLAGVSNGIISHYF).

It functions in the pathway amine and polyamine biosynthesis; betaine biosynthesis via choline pathway [regulation]. Functionally, repressor involved in the biosynthesis of the osmoprotectant glycine betaine. It represses transcription of the choline transporter BetT and the genes of BetAB involved in the synthesis of glycine betaine. The sequence is that of HTH-type transcriptional regulator BetI from Ectopseudomonas mendocina (strain ymp) (Pseudomonas mendocina).